The chain runs to 227 residues: Ribosomal RNA large subunit methyltransferase E (227 aa).

5 residues coordinate S-adenosyl-L-methionine: Gly78, Trp80, Asp103, Asp119, and Asp143. Lys183 acts as the Proton acceptor in catalysis.

This sequence belongs to the class I-like SAM-binding methyltransferase superfamily. RNA methyltransferase RlmE family.

Its subcellular location is the cytoplasm. The enzyme catalyses uridine(2552) in 23S rRNA + S-adenosyl-L-methionine = 2'-O-methyluridine(2552) in 23S rRNA + S-adenosyl-L-homocysteine + H(+). In terms of biological role, specifically methylates the uridine in position 2552 of 23S rRNA at the 2'-O position of the ribose in the fully assembled 50S ribosomal subunit. This Rickettsia rickettsii (strain Iowa) protein is Ribosomal RNA large subunit methyltransferase E.